The primary structure comprises 253 residues: 5'/3'-nucleotidase SurE (253 aa).

The a divalent metal cation site is built by D8, D9, S39, and N92.

Belongs to the SurE nucleotidase family. It depends on a divalent metal cation as a cofactor.

It localises to the cytoplasm. It catalyses the reaction a ribonucleoside 5'-phosphate + H2O = a ribonucleoside + phosphate. It carries out the reaction a ribonucleoside 3'-phosphate + H2O = a ribonucleoside + phosphate. The enzyme catalyses [phosphate](n) + H2O = [phosphate](n-1) + phosphate + H(+). Its function is as follows. Nucleotidase with a broad substrate specificity as it can dephosphorylate various ribo- and deoxyribonucleoside 5'-monophosphates and ribonucleoside 3'-monophosphates with highest affinity to 3'-AMP. Also hydrolyzes polyphosphate (exopolyphosphatase activity) with the preference for short-chain-length substrates (P20-25). Might be involved in the regulation of dNTP and NTP pools, and in the turnover of 3'-mononucleotides produced by numerous intracellular RNases (T1, T2, and F) during the degradation of various RNAs. The chain is 5'/3'-nucleotidase SurE from Citrobacter koseri (strain ATCC BAA-895 / CDC 4225-83 / SGSC4696).